Here is a 333-residue protein sequence, read N- to C-terminus: Phosphate acyltransferase (333 aa).

Belongs to the PlsX family. In terms of assembly, homodimer. Probably interacts with PlsY.

It is found in the cytoplasm. It catalyses the reaction a fatty acyl-[ACP] + phosphate = an acyl phosphate + holo-[ACP]. It participates in lipid metabolism; phospholipid metabolism. Functionally, catalyzes the reversible formation of acyl-phosphate (acyl-PO(4)) from acyl-[acyl-carrier-protein] (acyl-ACP). This enzyme utilizes acyl-ACP as fatty acyl donor, but not acyl-CoA. The sequence is that of Phosphate acyltransferase from Enterococcus faecalis (strain ATCC 700802 / V583).